The sequence spans 74 residues: Cytochrome c oxidase subunit 2 (74 aa).

Topologically, residues 1–14 are mitochondrial intermembrane; the sequence is MAHPSQLGLQDAAS. A helical membrane pass occupies residues 15-45; it reads PVMEELLHFHDHALMIVFLISTLVLYIIVAM. The Mitochondrial matrix segment spans residues 46-74; sequence VSTKLTDKYTIDSQEIEIVWTVLPAVILI.

This sequence belongs to the cytochrome c oxidase subunit 2 family. As to quaternary structure, component of the cytochrome c oxidase (complex IV, CIV), a multisubunit enzyme composed of 14 subunits. The complex is composed of a catalytic core of 3 subunits MT-CO1, MT-CO2 and MT-CO3, encoded in the mitochondrial DNA, and 11 supernumerary subunits COX4I, COX5A, COX5B, COX6A, COX6B, COX6C, COX7A, COX7B, COX7C, COX8 and NDUFA4, which are encoded in the nuclear genome. The complex exists as a monomer or a dimer and forms supercomplexes (SCs) in the inner mitochondrial membrane with NADH-ubiquinone oxidoreductase (complex I, CI) and ubiquinol-cytochrome c oxidoreductase (cytochrome b-c1 complex, complex III, CIII), resulting in different assemblies (supercomplex SCI(1)III(2)IV(1) and megacomplex MCI(2)III(2)IV(2)). Found in a complex with TMEM177, COA6, COX18, COX20, SCO1 and SCO2. Interacts with TMEM177 in a COX20-dependent manner. Interacts with COX20. Interacts with COX16. Requires Cu cation as cofactor.

It localises to the mitochondrion inner membrane. It catalyses the reaction 4 Fe(II)-[cytochrome c] + O2 + 8 H(+)(in) = 4 Fe(III)-[cytochrome c] + 2 H2O + 4 H(+)(out). Functionally, component of the cytochrome c oxidase, the last enzyme in the mitochondrial electron transport chain which drives oxidative phosphorylation. The respiratory chain contains 3 multisubunit complexes succinate dehydrogenase (complex II, CII), ubiquinol-cytochrome c oxidoreductase (cytochrome b-c1 complex, complex III, CIII) and cytochrome c oxidase (complex IV, CIV), that cooperate to transfer electrons derived from NADH and succinate to molecular oxygen, creating an electrochemical gradient over the inner membrane that drives transmembrane transport and the ATP synthase. Cytochrome c oxidase is the component of the respiratory chain that catalyzes the reduction of oxygen to water. Electrons originating from reduced cytochrome c in the intermembrane space (IMS) are transferred via the dinuclear copper A center (CU(A)) of subunit 2 and heme A of subunit 1 to the active site in subunit 1, a binuclear center (BNC) formed by heme A3 and copper B (CU(B)). The BNC reduces molecular oxygen to 2 water molecules using 4 electrons from cytochrome c in the IMS and 4 protons from the mitochondrial matrix. This Megalops atlanticus (Tarpon) protein is Cytochrome c oxidase subunit 2 (mt-co2).